The primary structure comprises 51 residues: Insulin (51 aa).

Disulfide bonds link Cys-7–Cys-37, Cys-19–Cys-50, and Cys-36–Cys-41.

Belongs to the insulin family. Heterodimer of a B chain and an A chain linked by two disulfide bonds.

It is found in the secreted. Insulin decreases blood glucose concentration. It increases cell permeability to monosaccharides, amino acids and fatty acids. It accelerates glycolysis, the pentose phosphate cycle, and glycogen synthesis in liver. The polypeptide is Insulin (INS) (Meleagris gallopavo (Wild turkey)).